The sequence spans 2464 residues: Nonribosomal peptide synthetase NPS2 (2464 aa).

The interval 275–670 (DDHHPGTSQP…GRIDTQIKLR (396 aa)) is adenylation 1. In terms of domain architecture, Carrier 1 spans 814–888 (TKAEGQLLEI…QIAKALDASS (75 aa)). Residue Ser-848 is modified to O-(pantetheine 4'-phosphoryl)serine. The interval 924-1325 (IYPPFPLQEG…EGLALDLAQG (402 aa)) is condensation 1. A Carrier 2 domain is found at 1364-1437 (EDLLLRLRKI…RMAASAGKKI (74 aa)). Ser-1398 bears the O-(pantetheine 4'-phosphoryl)serine mark. Residues 1479–1887 (DVFPVTTLQA…LRVLVDDLDA (409 aa)) are condensation 2. The region spanning 1917 to 1993 (SSWDEKSSTL…DLVMRAGAED (77 aa)) is the Carrier 3 domain. Ser-1954 is modified (O-(pantetheine 4'-phosphoryl)serine). A condensation 3 region spans residues 2047–2340 (GGSRYQHVFG…ATQIQDDLRE (294 aa)).

The protein belongs to the NRP synthetase family.

The protein operates within siderophore biosynthesis. Nonribosomal peptide synthetase; part of the siderophore basidioferrin biosynthetic pathway. The biosynthesis of basidioferrin depends on the hydroxylation of ornithine to N(5)-hydroxyornithine, catalyzed by the monooxygenase SMO1. The second step, the acylation of N(5)-hydroxy-L-ornithine is catalyzed by a not yet identified N-acyltransferase. Finally, assembly of basidioferrin is catalyzed by the nonribosomal peptide synthase (NRPS) NPS2 via amide bond formation between three L-AHO molecules to release the linear L-AHO trimer. N-5-acetyl-N-5-hydroxy-L-ornithine (L-AHO) and N-5-cis-anhydromevalonyl-N-5-hydroxy-L-ornithine (L-AMHO) are accepted as the substrates by the NPS2 adenylation (A) domain, but only L-AHO is trimerized. The sequence is that of Nonribosomal peptide synthetase NPS2 from Ceriporiopsis subvermispora (strain B) (White-rot fungus).